Reading from the N-terminus, the 100-residue chain is Small ribosomal subunit protein uS14c (100 aa).

It belongs to the universal ribosomal protein uS14 family. Part of the 30S ribosomal subunit.

The protein localises to the plastid. Its function is as follows. Binds 16S rRNA, required for the assembly of 30S particles. The polypeptide is Small ribosomal subunit protein uS14c (Cuscuta exaltata (Tall dodder)).